The primary structure comprises 257 residues: Anamorsin homolog (257 aa).

Positions 1-132 (MSVLALDVAR…ARGTAFALKS (132 aa)) are N-terminal SAM-like domain. The segment at 133-171 (RAVRVNATAADAADAWGASAAADDDELIDESALLTELDV) is linker. 4 residues coordinate [2Fe-2S] cluster: C181, C190, C193, and C195. Residues 181 to 195 (CDVGAGKKACKNCTC) form a fe-S binding site A region. Positions 219, 222, 230, and 233 each coordinate [4Fe-4S] cluster. 2 short sequence motifs (cx2C motif) span residues 219–222 (CGNC) and 230–233 (CAGC). A fe-S binding site B region spans residues 219 to 233 (CGNCALGDAFRCAGC).

It belongs to the anamorsin family. In terms of assembly, monomer. [2Fe-2S] cluster is required as a cofactor. [4Fe-4S] cluster serves as cofactor.

It localises to the cytoplasm. It is found in the mitochondrion intermembrane space. Functionally, component of the cytosolic iron-sulfur (Fe-S) protein assembly (CIA) machinery. Required for the maturation of extramitochondrial Fe-S proteins. Part of an electron transfer chain functioning in an early step of cytosolic Fe-S biogenesis, facilitating the de novo assembly of a [4Fe-4S] cluster on the cytosolic Fe-S scaffold complex. Electrons are transferred from NADPH via a FAD- and FMN-containing diflavin oxidoreductase. Together with the diflavin oxidoreductase, also required for the assembly of the diferric tyrosyl radical cofactor of ribonucleotide reductase (RNR), probably by providing electrons for reduction during radical cofactor maturation in the catalytic small subunit. The polypeptide is Anamorsin homolog (Ostreococcus lucimarinus (strain CCE9901)).